The chain runs to 418 residues: Tektin-1 (418 aa).

4 coiled-coil regions span residues 20-107 (NKSQ…SYKE), 134-177 (QELQ…DLRD), 266-308 (NGLK…QQEG), and 332-383 (IAQY…ENTI).

The protein belongs to the tektin family. In terms of assembly, microtubule inner protein component of sperm flagellar doublet microtubules. In terms of processing, ubiquitinated, leading to its degradation. Deubiquitinated by USP16, promoting its stability.

The protein resides in the cytoplasm. It localises to the cytoskeleton. It is found in the cilium axoneme. Its subcellular location is the flagellum axoneme. Functionally, microtubule inner protein (MIP) part of the dynein-decorated doublet microtubules (DMTs) in cilia and flagellar axoneme. Forms filamentous polymers in the walls of ciliary and flagellar microtubules. The chain is Tektin-1 (Tekt1) from Mus musculus (Mouse).